Here is a 364-residue protein sequence, read N- to C-terminus: MLKRTPLFDLYKEYGGKTIDFGGWELPVQFSSIKEEHEAVRTKAGLFDVSHMGEVEITGTDSLPFLQKLLTNDVSTLKEGGAQYTAMCYEDGGTIDDLLVYKKAANVYMLVINAANIDKDVDWMNKHIKGDVSVRNVSDEIALLALQGPKAEAILKQVADHDLAELKPFMFRDDAAVGSVQALVSRTGYTGEDGFEIYCRNEDAACIWKLLLETGKDSGLVPCGLGARDTLRFEAKLPLYGQELSKDITPIEAGIGFAVKTNKASDFIGKAVLASQKEHGADRKLVGLEMIDKGIPRHGYAVYYQGEQAGEVTTGTQSPTLKKNVGLALLKKEACALDTVVEVEIRNKRLKAKIVKTPFYKRQP.

It belongs to the GcvT family. In terms of assembly, the glycine cleavage system is composed of four proteins: P, T, L and H.

It catalyses the reaction N(6)-[(R)-S(8)-aminomethyldihydrolipoyl]-L-lysyl-[protein] + (6S)-5,6,7,8-tetrahydrofolate = N(6)-[(R)-dihydrolipoyl]-L-lysyl-[protein] + (6R)-5,10-methylene-5,6,7,8-tetrahydrofolate + NH4(+). In terms of biological role, the glycine cleavage system catalyzes the degradation of glycine. In Bacillus licheniformis (strain ATCC 14580 / DSM 13 / JCM 2505 / CCUG 7422 / NBRC 12200 / NCIMB 9375 / NCTC 10341 / NRRL NRS-1264 / Gibson 46), this protein is Aminomethyltransferase.